Consider the following 256-residue polypeptide: 3-dehydroquinate dehydratase (256 aa).

Residues 46–48 and R82 contribute to the 3-dehydroquinate site; that span reads EWR. H144 acts as the Proton donor/acceptor in catalysis. The active-site Schiff-base intermediate with substrate is the K171. Residues R213, S232, and Q236 each contribute to the 3-dehydroquinate site.

This sequence belongs to the type-I 3-dehydroquinase family. Homodimer.

It carries out the reaction 3-dehydroquinate = 3-dehydroshikimate + H2O. It functions in the pathway metabolic intermediate biosynthesis; chorismate biosynthesis; chorismate from D-erythrose 4-phosphate and phosphoenolpyruvate: step 3/7. In terms of biological role, involved in the third step of the chorismate pathway, which leads to the biosynthesis of aromatic amino acids. Catalyzes the cis-dehydration of 3-dehydroquinate (DHQ) and introduces the first double bond of the aromatic ring to yield 3-dehydroshikimate. The protein is 3-dehydroquinate dehydratase of Shouchella clausii (strain KSM-K16) (Alkalihalobacillus clausii).